Reading from the N-terminus, the 429-residue chain is Enolase (429 aa).

Glutamine 163 serves as a coordination point for (2R)-2-phosphoglycerate. Glutamate 205 acts as the Proton donor in catalysis. Mg(2+)-binding residues include aspartate 242, glutamate 287, and aspartate 314. (2R)-2-phosphoglycerate-binding residues include lysine 339, arginine 368, serine 369, and lysine 390. Lysine 339 functions as the Proton acceptor in the catalytic mechanism.

This sequence belongs to the enolase family. Homooctamer. Requires Mg(2+) as cofactor.

It is found in the cytoplasm. Its subcellular location is the secreted. The protein resides in the cell surface. The enzyme catalyses (2R)-2-phosphoglycerate = phosphoenolpyruvate + H2O. It functions in the pathway carbohydrate degradation; glycolysis; pyruvate from D-glyceraldehyde 3-phosphate: step 4/5. In terms of biological role, catalyzes the reversible conversion of 2-phosphoglycerate (2-PG) into phosphoenolpyruvate (PEP). It is essential for the degradation of carbohydrates via glycolysis. This Zymomonas mobilis subsp. mobilis (strain ATCC 31821 / ZM4 / CP4) protein is Enolase.